The chain runs to 826 residues: Dolichyl-diphosphooligosaccharide--protein glycosyltransferase subunit STT3B (826 aa).

A disordered region spans residues 1–60 (MAEPSAPESKHKSSLNSSPWSGLMALGNSRHGHHGPGAQCAHKAAGGAAPPKPAPAGLSG). A2 carries the post-translational modification N-acetylalanine. Over 2–41 (AEPSAPESKHKSSLNSSPWSGLMALGNSRHGHHGPGAQCA) the chain is Cytoplasmic. Phosphoserine occurs at positions 13, 18, and 29. Residues 37 to 49 (GAQCAHKAAGGAA) are compositionally biased toward low complexity. The helical transmembrane segment at 42–86 (HKAAGGAAPPKPAPAGLSGGLSQPAGWQSLLSFTILFLAWLAGFS) threads the bilayer. Residues 87–173 (SRLFAVIRFE…VHIRDVCVFL (87 aa)) lie on the Lumenal side of the membrane. Residues 101–103 (EFD) carry the DXD motif 1 motif. D103 lines the Mn(2+) pocket. A helical membrane pass occupies residues 174 to 192 (APTFSGLTSISTFLLTREL). Residues 193 to 194 (WN) are Cytoplasmic-facing. The chain crosses the membrane as a helical span at residues 195–212 (QGAGLLAACFIAIVPGYI). Over 213-223 (SRSVAGSFDNE) the chain is Lumenal. Residues D221 and E223 each coordinate Mn(2+). The short motif at 221–223 (DNE) is the DXD motif 2 element. The helical transmembrane segment at 224–243 (GIAIFALQFTYYLWVKSVKT) threads the bilayer. Over 244–245 (GS) the chain is Cytoplasmic. Residues 246–260 (VFWTMCCCLSYFYMV) traverse the membrane as a helical segment. Over 261–265 (SAWGG) the chain is Lumenal. A helical transmembrane segment spans residues 266–282 (YVFIINLIPLHVFVLLL). Residues 283–287 (MQRYS) lie on the Cytoplasmic side of the membrane. The chain crosses the membrane as a helical span at residues 288–313 (KRVYIAYSTFYIVGLILSMQIPFVGF). The Lumenal portion of the chain corresponds to 314–321 (QPIRTSEH). The helical transmembrane segment at 322–341 (MAAAGVFALLQAYAFLQYLR) threads the bilayer. Residues 342–350 (DRLTKQEFQ) lie on the Cytoplasmic side of the membrane. Residues 351–371 (TLFFLGVSLAAGAVFLSVIYL) traverse the membrane as a helical segment. Residues 372–410 (TYTGYIAPWSGRFYSLWDTGYAKIHIPIIASVSEHQPTT) lie on the Lumenal side of the membrane. The SVSE motif signature appears at 402 to 405 (SVSE). Residues 411–433 (WVSFFFDLHILVCTFPAGLWFCI) form a helical membrane-spanning segment. Over 434 to 439 (KNINDE) the chain is Cytoplasmic. A helical transmembrane segment spans residues 440–456 (RVFVALYAISAVYFAGV). Residues 457 to 460 (MVRL) are Lumenal-facing. R459 contacts dolichyl diphosphooligosaccharide. Residues 461-482 (MLTLTPVVCMLSAIAFSNVFEH) form a helical membrane-spanning segment. The Cytoplasmic portion of the chain corresponds to 483 to 526 (YLGDDMKRENPPVEDSSDEDDKRNQGNLYDKAGKVRKHATEQEK). The disordered stretch occupies residues 490–509 (RENPPVEDSSDEDDKRNQGN). A phosphoserine mark is found at S498 and S499. The chain crosses the membrane as a helical span at residues 527 to 552 (TEEGLGPNIKSIVTMLMLMLLMMFAV). Over 553-826 (HCTWVTSNAY…KGKKISKKTV (274 aa)) the chain is Lumenal. An interacts with target acceptor peptide in protein substrate region spans residues 604–606 (WWD). The short motif at 604-608 (WWDYG) is the WWDYG motif element. Y609 serves as a coordination point for dolichyl diphosphooligosaccharide. N-linked (GlcNAc...) asparagine glycans are attached at residues N616 and N623. N627 carries N-linked (GlcNAc...) (high mannose) asparagine glycosylation. N641 carries N-linked (GlcNAc...) asparagine glycosylation. A DK motif motif is present at residues 671–678 (DINKFLWM).

The protein belongs to the STT3 family. As to quaternary structure, component of the oligosaccharyltransferase (OST) complex. There are 2 OST complexes, OST-A and OST-B, which contain STT3A or STT3B as catalytic subunit, respectively. OST-A and OST-B contain common core subunits RPN1, RPN2, OST48, OST4, DAD1 and TMEM258, and OST-B contains either MAGT1 or TUSC3 as specific accessory subunit. Mg(2+) is required as a cofactor. Mn(2+) serves as cofactor. As to expression, expressed in heart, brain, placenta, lung, liver, muscle, kidney and pancreas. Expressed in skin fibroblasts (at protein level).

It localises to the endoplasmic reticulum. The protein localises to the endoplasmic reticulum membrane. The enzyme catalyses a di-trans,poly-cis-dolichyl diphosphooligosaccharide + L-asparaginyl-[protein] = N(4)-(oligosaccharide-(1-&gt;4)-N-acetyl-beta-D-glucosaminyl-(1-&gt;4)-N-acetyl-beta-D-glucosaminyl)-L-asparaginyl-[protein] + a di-trans,poly-cis-dolichyl diphosphate + H(+). It participates in protein modification; protein glycosylation. Catalytic subunit of the oligosaccharyl transferase (OST) complex that catalyzes the initial transfer of a defined glycan (Glc(3)Man(9)GlcNAc(2) in eukaryotes) from the lipid carrier dolichol-pyrophosphate to an asparagine residue within an Asn-X-Ser/Thr consensus motif in nascent polypeptide chains, the first step in protein N-glycosylation. N-glycosylation occurs cotranslationally and the complex associates with the Sec61 complex at the channel-forming translocon complex that mediates protein translocation across the endoplasmic reticulum (ER). All subunits are required for a maximal enzyme activity. This subunit contains the active site and the acceptor peptide and donor lipid-linked oligosaccharide (LLO) binding pockets. STT3B is present in a small subset of OST complexes (OST-B) and mediates both cotranslational and post-translational N-glycosylation of target proteins: STT3B-containing complexes are required for efficient post-translational glycosylation and while they are less competent than STT3A-containing complexes for cotranslational glycosylation, they have the ability to mediate glycosylation of some nascent sites that are not accessible for STT3A. STT3B-containing complexes also act post-translationally and mediate modification of skipped glycosylation sites in unfolded proteins. Plays a role in ER-associated degradation (ERAD) pathway that mediates ubiquitin-dependent degradation of misfolded endoplasmic reticulum proteins by mediating N-glycosylation of unfolded proteins, which are then recognized by the ERAD pathway and targeted for degradation. Mediates glycosylation of the disease variant AMYL-TTR 'Asp-38' of TTR at 'Asn-118', leading to its degradation. The polypeptide is Dolichyl-diphosphooligosaccharide--protein glycosyltransferase subunit STT3B (Homo sapiens (Human)).